The primary structure comprises 117 residues: Large ribosomal subunit protein bL20c (117 aa).

The protein belongs to the bacterial ribosomal protein bL20 family.

It localises to the plastid. The protein localises to the chloroplast. Functionally, binds directly to 23S ribosomal RNA and is necessary for the in vitro assembly process of the 50S ribosomal subunit. It is not involved in the protein synthesizing functions of that subunit. The polypeptide is Large ribosomal subunit protein bL20c (Populus trichocarpa (Western balsam poplar)).